The chain runs to 636 residues: Amylosucrase (636 aa).

Positions 152, 195, 262, and 292 each coordinate substrate. D294 serves as the catalytic Nucleophile. E336 serves as the catalytic Proton donor. Substrate is bound by residues H400, D401, and R517.

Belongs to the glycosyl hydrolase 13 family. As to quaternary structure, monomer.

The protein localises to the secreted. It carries out the reaction [(1-&gt;4)-alpha-D-glucosyl](n) + sucrose = [(1-&gt;4)-alpha-D-glucosyl](n+1) + D-fructose. Amylosucrase favors hydrolysis at low sucrose concentrations, and polymerization at high sucrose concentrations. Competitively inhibited by fructose. In terms of biological role, catalyzes the synthesis of alpha-glucan from sucrose. Catalyzes, in addition, sucrose hydrolysis, maltose and maltotriose synthesis by successive transfers of the glucosyl moiety of sucrose onto the released glucose, and finally turanose and trehalulose synthesis, these two sucrose isomers being obtained by glucosyl transfer onto fructose. This is Amylosucrase (ams) from Neisseria polysaccharea.